Consider the following 160-residue polypeptide: Protein-export protein SecB (160 aa).

It belongs to the SecB family. Homotetramer, a dimer of dimers. One homotetramer interacts with 1 SecA dimer.

It is found in the cytoplasm. One of the proteins required for the normal export of preproteins out of the cell cytoplasm. It is a molecular chaperone that binds to a subset of precursor proteins, maintaining them in a translocation-competent state. It also specifically binds to its receptor SecA. The sequence is that of Protein-export protein SecB from Rhizobium etli (strain ATCC 51251 / DSM 11541 / JCM 21823 / NBRC 15573 / CFN 42).